Here is a 415-residue protein sequence, read N- to C-terminus: Ubp4-interactor sfp47 (415 aa).

Phosphoserine is present on residues Ser-221 and Ser-226. Phosphothreonine is present on Thr-231. A Phosphoserine modification is found at Ser-235. Positions 352–415 constitute an SH3 domain; the sequence is PIFAYVRALY…PSNYIEELEY (64 aa).

In terms of assembly, interacts with ubp4.

Its subcellular location is the cytoplasm. The protein localises to the endosome. Functionally, required for the regulation of activity and recruitment of ubp4 to endosomes. The sequence is that of Ubp4-interactor sfp47 (sfp47) from Schizosaccharomyces pombe (strain 972 / ATCC 24843) (Fission yeast).